The chain runs to 145 residues: Large ribosomal subunit protein uL11 (145 aa).

This sequence belongs to the universal ribosomal protein uL11 family. Part of the ribosomal stalk of the 50S ribosomal subunit. Interacts with L10 and the large rRNA to form the base of the stalk. L10 forms an elongated spine to which L12 dimers bind in a sequential fashion forming a multimeric L10(L12)X complex. Post-translationally, one or more lysine residues are methylated.

Functionally, forms part of the ribosomal stalk which helps the ribosome interact with GTP-bound translation factors. In Rickettsia peacockii (strain Rustic), this protein is Large ribosomal subunit protein uL11.